Here is a 395-residue protein sequence, read N- to C-terminus: uncharacterized protein (395 aa).

This is an uncharacterized protein from Methanocaldococcus jannaschii (strain ATCC 43067 / DSM 2661 / JAL-1 / JCM 10045 / NBRC 100440) (Methanococcus jannaschii).